Reading from the N-terminus, the 397-residue chain is MSESVHTNTSLWSKGMKAVIVAQFLSAFGDNALLFATLALLKAQFYPEWSQPILQMVFVGAYILFAPFVGQVADSFAKGRVMMFANGLKLLGAASICFGINPFLGYTLVGVGAAAYSPAKYGILGELTTGSKLVKANGLMEASTIAAILLGSVAGGVLADWHVLVALAACALAYGGAVVANIYIPKLAAARPGQSWNLISMTRSFLNACTSLWRNGETRFSLVGTSLFWGAGVTLRFLLVLWVPVALGITDNATPTYLNAMVAIGIVVGAGAAAKLVTLETVSRCMPAGILIGVVVLIFSLQHELLPAYALLMLIGVLGGFFVVPLNALLQERGKKSVGAGNAIAVQNLGENSAMLLMLGIYSLAVMVGIPVVPIGIGFGALFALAITALWIWQRRH.

The Periplasmic segment spans residues 1–17 (MSESVHTNTSLWSKGMK). The helical transmembrane segment at 18-38 (AVIVAQFLSAFGDNALLFATL) threads the bilayer. At 39-52 (ALLKAQFYPEWSQP) the chain is on the cytoplasmic side. Residues 53-73 (ILQMVFVGAYILFAPFVGQVA) traverse the membrane as a helical segment. Residues 74–90 (DSFAKGRVMMFANGLKL) lie on the Periplasmic side of the membrane. Residues 91–111 (LGAASICFGINPFLGYTLVGV) traverse the membrane as a helical segment. Over 112–144 (GAAAYSPAKYGILGELTTGSKLVKANGLMEAST) the chain is Cytoplasmic. A helical transmembrane segment spans residues 145 to 165 (IAAILLGSVAGGVLADWHVLV). Ala-166 is a topological domain (periplasmic). A helical membrane pass occupies residues 167–187 (LAACALAYGGAVVANIYIPKL). At 188–226 (AAARPGQSWNLISMTRSFLNACTSLWRNGETRFSLVGTS) the chain is on the cytoplasmic side. Residues 227–247 (LFWGAGVTLRFLLVLWVPVAL) form a helical membrane-spanning segment. At 248–256 (GITDNATPT) the chain is on the periplasmic side. Residues 257 to 277 (YLNAMVAIGIVVGAGAAAKLV) form a helical membrane-spanning segment. Topologically, residues 278–280 (TLE) are cytoplasmic. A helical membrane pass occupies residues 281 to 301 (TVSRCMPAGILIGVVVLIFSL). Residues 302–304 (QHE) are Periplasmic-facing. A helical transmembrane segment spans residues 305 to 325 (LLPAYALLMLIGVLGGFFVVP). The Cytoplasmic portion of the chain corresponds to 326-343 (LNALLQERGKKSVGAGNA). Residues 344–364 (IAVQNLGENSAMLLMLGIYSL) traverse the membrane as a helical segment. Residues 365–366 (AV) are Periplasmic-facing. Residues 367 to 387 (MVGIPVVPIGIGFGALFALAI) traverse the membrane as a helical segment. At 388–397 (TALWIWQRRH) the chain is on the cytoplasmic side.

Belongs to the major facilitator superfamily. LplT (TC 2.A.1.42) family.

The protein localises to the cell inner membrane. Functionally, catalyzes the facilitated diffusion of 2-acyl-glycero-3-phosphoethanolamine (2-acyl-GPE) into the cell. In Escherichia coli O7:K1 (strain IAI39 / ExPEC), this protein is Lysophospholipid transporter LplT.